Reading from the N-terminus, the 128-residue chain is Large ribosomal subunit protein bL17 (128 aa).

This sequence belongs to the bacterial ribosomal protein bL17 family. Part of the 50S ribosomal subunit. Contacts protein L32.

In Streptococcus thermophilus (strain ATCC BAA-250 / LMG 18311), this protein is Large ribosomal subunit protein bL17.